The sequence spans 331 residues: CRISPR-associated endonuclease Cas1 (331 aa).

Residues glutamate 158, histidine 223, and aspartate 238 each contribute to the Mn(2+) site.

This sequence belongs to the CRISPR-associated endonuclease Cas1 family. In terms of assembly, homodimer, forms a heterotetramer with a Cas2 homodimer. The cofactor is Mg(2+). Mn(2+) is required as a cofactor.

In terms of biological role, CRISPR (clustered regularly interspaced short palindromic repeat), is an adaptive immune system that provides protection against mobile genetic elements (viruses, transposable elements and conjugative plasmids). CRISPR clusters contain spacers, sequences complementary to antecedent mobile elements, and target invading nucleic acids. CRISPR clusters are transcribed and processed into CRISPR RNA (crRNA). Acts as a dsDNA endonuclease. Involved in the integration of spacer DNA into the CRISPR cassette. Plasmid targeted by CRISPR locus P1 transform wild-type cells very poorly. The polypeptide is CRISPR-associated endonuclease Cas1 (Haloferax volcanii (strain ATCC 29605 / DSM 3757 / JCM 8879 / NBRC 14742 / NCIMB 2012 / VKM B-1768 / DS2) (Halobacterium volcanii)).